Here is a 939-residue protein sequence, read N- to C-terminus: Isoleucine--tRNA ligase (939 aa).

The 'HIGH' region motif lies at 57-67; it reads PYANGHIHLGH. L-isoleucyl-5'-AMP is bound at residue Glu-561. Residues 602-606 carry the 'KMSKS' region motif; the sequence is KMSKS. Lys-605 is a binding site for ATP. Residues Cys-903, Cys-906, Cys-923, and Cys-926 each contribute to the Zn(2+) site.

It belongs to the class-I aminoacyl-tRNA synthetase family. IleS type 1 subfamily. As to quaternary structure, monomer. It depends on Zn(2+) as a cofactor.

The protein localises to the cytoplasm. It catalyses the reaction tRNA(Ile) + L-isoleucine + ATP = L-isoleucyl-tRNA(Ile) + AMP + diphosphate. Functionally, catalyzes the attachment of isoleucine to tRNA(Ile). As IleRS can inadvertently accommodate and process structurally similar amino acids such as valine, to avoid such errors it has two additional distinct tRNA(Ile)-dependent editing activities. One activity is designated as 'pretransfer' editing and involves the hydrolysis of activated Val-AMP. The other activity is designated 'posttransfer' editing and involves deacylation of mischarged Val-tRNA(Ile). This chain is Isoleucine--tRNA ligase, found in Desulfotalea psychrophila (strain LSv54 / DSM 12343).